A 360-amino-acid chain; its full sequence is Vomilenine reductase (360 aa).

One can recognise an Enoyl reductase (ER) domain in the interval 23-351; it reads GLLSPFNFSR…KADVKYRFVI (329 aa). Zn(2+) is bound at residue Cys-50. Ser-52 is a binding site for an alcohol. Ser-52 lines the NADP(+) pocket. Residues Asp-53, His-72, Glu-73, Cys-103, Cys-106, Cys-109, Cys-117, and Cys-166 each coordinate Zn(2+). Residue His-72 coordinates an alcohol. NADP(+) is bound by residues Leu-192, Gly-194, Leu-195, Ser-214, Thr-215, Ser-216, Lys-219, Lys-220, Val-277, Ala-279, Ser-301, and Arg-348.

This sequence belongs to the zinc-containing alcohol dehydrogenase family. Class-P subfamily. In terms of assembly, homodimer. Requires Zn(2+) as cofactor. As to expression, confined to roots.

It is found in the cytoplasm. It catalyses the reaction (2R)-1,2-dihydrovomilenine + NADP(+) = vomilenine + NADPH + H(+). Its pathway is alkaloid biosynthesis; ajmaline biosynthesis. With respect to regulation, inhibited by EDTA and p-hydroxymercuribenzoate, a sulfhydryl reagent. In terms of biological role, alcohol dehydrogenase involved in the biosynthesis of ajmaline-type monoterpenoid indole alkaloids (MIAs) natural products, important plant-derived pharmaceuticals used in the therapy of heart disorders. Catalyzes the conversion of vomilenine to 1,2-dihydrovomilenine, an intermediate chemical in the biosynthesis of ajmaline. This is Vomilenine reductase from Rauvolfia serpentina (Serpentine wood).